The following is a 194-amino-acid chain: uncharacterized protein (194 aa).

Positions 1 to 15 are cleaved as a signal peptide; the sequence is MFVLSIALLSCTTLC. The PAN domain maps to 49–134; that stretch reads CPQGLHADAI…KATYYEKIRC (86 aa). 2 disulfide bridges follow: Cys49–Cys134 and Cys79–Cys106.

This is an uncharacterized protein from Caenorhabditis elegans.